A 253-amino-acid polypeptide reads, in one-letter code: MLSRIKQGIKTKRSSSSSSSRSKTGDEDSSLMLRWVYDNDPPLKQTDTFQYLMAPTAPTDKASSSYIATTYKVDCKVEIISRASIRNFDELINIASCLIDSYDGQLLIKPWIITVYLTIITHLVKEPDTHGVRSSVNRYHNGFNEILTLYINKNFAPENKKYSFKKNLSTTHKGNQCNIIISIDLLPTDRKGKSIKDVYEVKMPDNREIPNFQQMLKPYNLKVKEKNGKYLISHKMSSSDDSIDVSDSDENEF.

Positions 1–26 are disordered; that stretch reads MLSRIKQGIKTKRSSSSSSSRSKTGD. Positions 55–58 match the PTAP/PSAP motif motif; that stretch reads PTAP.

As to quaternary structure, homomultimer. Interacts with viral nucleocapsid. Interacts with host TSG101.

It localises to the virion membrane. The protein resides in the host endomembrane system. Its subcellular location is the host nucleus membrane. Plays a major role in assembly and budding of virion, by recruiting cellular partners of the ESCRT complexes that play a key role in releasing the budding particle from the host membrane. Condensates the ribonucleocapsid core during virus assembly. This Bos taurus (Bovine) protein is Matrix protein (M).